A 439-amino-acid polypeptide reads, in one-letter code: Signal recognition particle 54 kDa protein (439 aa).

GTP is bound by residues 104 to 111 (GLQGSGKT), 184 to 188 (DTAGR), and 242 to 245 (SKLD).

The protein belongs to the GTP-binding SRP family. SRP54 subfamily. In terms of assembly, part of the signal recognition particle protein translocation system, which is composed of SRP and FtsY. Archaeal SRP consists of a 7S RNA molecule of 300 nucleotides and two protein subunits: SRP54 and SRP19.

It localises to the cytoplasm. It carries out the reaction GTP + H2O = GDP + phosphate + H(+). Its function is as follows. Involved in targeting and insertion of nascent membrane proteins into the cytoplasmic membrane. Binds to the hydrophobic signal sequence of the ribosome-nascent chain (RNC) as it emerges from the ribosomes. The SRP-RNC complex is then targeted to the cytoplasmic membrane where it interacts with the SRP receptor FtsY. The polypeptide is Signal recognition particle 54 kDa protein (Methanococcoides burtonii (strain DSM 6242 / NBRC 107633 / OCM 468 / ACE-M)).